Here is a 219-residue protein sequence, read N- to C-terminus: Protein ERP1 (219 aa).

The first 22 residues, Met-1–Ala-22, serve as a signal peptide directing secretion. Residues Phe-23–Arg-186 lie on the Lumenal side of the membrane. The 100-residue stretch at Arg-32–Val-131 folds into the GOLD domain. The chain crosses the membrane as a helical span at residues Ala-187 to Lys-207. Topologically, residues His-208–Leu-219 are cytoplasmic.

It belongs to the EMP24/GP25L family. Associates with EMP24, ERV25 and ERP2.

Its subcellular location is the endoplasmic reticulum membrane. Its function is as follows. Involved in vesicular protein trafficking. This is Protein ERP1 (ERP1) from Saccharomyces cerevisiae (strain ATCC 204508 / S288c) (Baker's yeast).